A 190-amino-acid chain; its full sequence is Xanthine phosphoribosyltransferase (190 aa).

Positions 20 and 27 each coordinate xanthine. 129 to 133 is a binding site for 5-phospho-alpha-D-ribose 1-diphosphate; it reads ANGAA. Lys157 is a xanthine binding site.

This sequence belongs to the purine/pyrimidine phosphoribosyltransferase family. Xpt subfamily. As to quaternary structure, homodimer.

Its subcellular location is the cytoplasm. The catalysed reaction is XMP + diphosphate = xanthine + 5-phospho-alpha-D-ribose 1-diphosphate. It functions in the pathway purine metabolism; XMP biosynthesis via salvage pathway; XMP from xanthine: step 1/1. In terms of biological role, converts the preformed base xanthine, a product of nucleic acid breakdown, to xanthosine 5'-monophosphate (XMP), so it can be reused for RNA or DNA synthesis. The sequence is that of Xanthine phosphoribosyltransferase from Laribacter hongkongensis (strain HLHK9).